The sequence spans 267 residues: Hydroxyethylthiazole kinase 2 (267 aa).

A substrate-binding site is contributed by Met-41. Residues Lys-116 and Thr-166 each coordinate ATP. Gly-193 serves as a coordination point for substrate.

This sequence belongs to the Thz kinase family. Requires Mg(2+) as cofactor.

The catalysed reaction is 5-(2-hydroxyethyl)-4-methylthiazole + ATP = 4-methyl-5-(2-phosphooxyethyl)-thiazole + ADP + H(+). The protein operates within cofactor biosynthesis; thiamine diphosphate biosynthesis; 4-methyl-5-(2-phosphoethyl)-thiazole from 5-(2-hydroxyethyl)-4-methylthiazole: step 1/1. Catalyzes the phosphorylation of the hydroxyl group of 4-methyl-5-beta-hydroxyethylthiazole (THZ). The chain is Hydroxyethylthiazole kinase 2 from Streptococcus pneumoniae (strain P1031).